The following is a 104-amino-acid chain: Ribonuclease P protein component 4 (104 aa).

C57, C60, C83, and C86 together coordinate Zn(2+).

This sequence belongs to the eukaryotic/archaeal RNase P protein component 4 family. In terms of assembly, consists of a catalytic RNA component and at least 4-5 protein subunits. It depends on Zn(2+) as a cofactor.

It is found in the cytoplasm. It catalyses the reaction Endonucleolytic cleavage of RNA, removing 5'-extranucleotides from tRNA precursor.. Its function is as follows. Part of ribonuclease P, a protein complex that generates mature tRNA molecules by cleaving their 5'-ends. The polypeptide is Ribonuclease P protein component 4 (Saccharolobus islandicus (strain M.14.25 / Kamchatka #1) (Sulfolobus islandicus)).